Here is a 5495-residue protein sequence, read N- to C-terminus: Microtubule-associated protein futsch (5495 aa).

Disordered regions lie at residues methionine 1–glycine 97, alanine 656–glutamate 975, arginine 988–glutamate 1074, glutamate 1086–lysine 1111, lysine 1128–proline 1167, serine 1185–isoleucine 1204, lysine 1255–arginine 1275, histidine 1306–lysine 1358, asparagine 1402–serine 1840, glutamate 1866–valine 2631, alanine 2709–alanine 2810, leucine 2830–leucine 4166, lysine 4196–proline 4230, isoleucine 4362–leucine 4612, alanine 4636–leucine 4668, alanine 4687–alanine 4975, lysine 5035–glutamine 5065, serine 5101–serine 5138, proline 5170–alanine 5199, and glycine 5328–glutamate 5350. Over residues alanine 35–glutamine 48 the composition is skewed to low complexity. Composition is skewed to basic and acidic residues over residues alanine 656 to aspartate 672, glutamate 696 to glutamate 716, and glycine 758 to serine 795. Composition is skewed to low complexity over residues proline 797 to proline 806 and proline 819 to lysine 831. Positions serine 832 to glutamate 843 are enriched in basic and acidic residues. A compositionally biased stretch (low complexity) spans arginine 850–glutamine 888. Over residues lysine 918 to glycine 931 the composition is skewed to basic and acidic residues. Over residues threonine 932–serine 942 the composition is skewed to polar residues. Composition is skewed to basic and acidic residues over residues aspartate 962 to glutamate 975 and arginine 988 to proline 1007. Residues glycine 1012 to valine 1041 show a composition bias toward acidic residues. Residues methionine 1047 to lysine 1065 are compositionally biased toward basic and acidic residues. 2 stretches are compositionally biased toward basic and acidic residues: residues lysine 1128–glutamate 1140 and proline 1148–glutamine 1163. The segment covering threonine 1187–proline 1196 has biased composition (polar residues). Composition is skewed to basic and acidic residues over residues histidine 1306–glutamine 1319, serine 1327–lysine 1337, lysine 1343–lysine 1358, and glutamate 1408–serine 1443. Repeat copies occupy residues arginine 1469 to proline 1502 and leucine 1513 to lysine 1539. The interval arginine 1469 to arginine 4032 is 53 X approximate repeat. 5 stretches are compositionally biased toward basic and acidic residues: residues proline 1546–serine 1555, serine 1571–serine 1663, serine 1679–isoleucine 1696, glycine 1718–serine 1732, and serine 1748–serine 1779. 17 consecutive repeat copies span residues lysine 1622–isoleucine 1649, aspartate 1660–lysine 1686, proline 1690–glycine 1718, lysine 1755–threonine 1782, glutamate 1790–serine 1818, valine 1837–leucine 1865, serine 1874–proline 1902, proline 1911–glutamate 1939, lysine 1948–lysine 1976, threonine 1985–glutamine 2013, aspartate 2022–lysine 2050, alanine 2059–lysine 2087, alanine 2096–lysine 2124, alanine 2133–lysine 2161, alanine 2170–lysine 2198, lysine 2215–valine 2243, and glutamate 2262–serine 2292. Residues glutamate 1804–arginine 1815 are compositionally biased toward polar residues. Composition is skewed to basic and acidic residues over residues valine 1887–serine 1896, histidine 1904–lysine 1942, methionine 1960–lysine 1976, serine 1994–arginine 2007, serine 2041–alanine 2059, serine 2078–alanine 2096, serine 2115–alanine 2133, serine 2152–alanine 2170, serine 2189–alanine 2207, serine 2226–alanine 2244, serine 2263–alanine 2281, serine 2300–alanine 2318, serine 2337–alanine 2355, serine 2374–methionine 2391, serine 2419–serine 2435, serine 2466–threonine 2482, isoleucine 2560–serine 2588, and serine 2604–arginine 2627. Repeat unit 20 spans residues alanine 2355–methionine 2391. 2 repeat units span residues leucine 2703–proline 2726 and tryptophan 2761–glutamate 2787. Residues glutamate 2764–arginine 2780 show a composition bias toward basic and acidic residues. At serine 2800 the chain carries Phosphoserine; by GSK3-beta. 3 tandem repeats follow at residues leucine 2820–glutamine 2846, leucine 2864–arginine 2892, and valine 2907–serine 2933. Residues proline 2845 to proline 2861 show a composition bias toward low complexity. Composition is skewed to basic and acidic residues over residues alanine 2889–serine 2914 and glycine 2942–serine 2954. A compositionally biased stretch (polar residues) spans arginine 2955–aspartate 2966. 28 tandem repeats follow at residues proline 2956–lysine 2987, glycine 3006–glutamate 3034, serine 3049–serine 3075, glutamate 3089–alanine 3117, aspartate 3131–aspartate 3158, lysine 3200–glycine 3224, aspartate 3228–serine 3256, valine 3265–leucine 3293, proline 3302–lysine 3330, lysine 3339–proline 3367, aspartate 3376–proline 3404, proline 3413–proline 3441, aspartate 3450–proline 3478, aspartate 3487–proline 3515, aspartate 3524–proline 3552, aspartate 3561–proline 3589, aspartate 3598–proline 3626, aspartate 3635–proline 3663, aspartate 3672–proline 3700, aspartate 3709–proline 3737, aspartate 3746–proline 3774, aspartate 3783–proline 3811, aspartate 3820–proline 3848, arginine 3867–aspartate 3894, glutamate 3895–arginine 3921, aspartate 3931–arginine 3958, aspartate 3968–arginine 3995, and aspartate 4005–arginine 4032. Composition is skewed to basic and acidic residues over residues serine 2980 to alanine 2996, serine 3017 to proline 3051, valine 3061 to serine 3075, glutamate 3087 to glutamate 3116, proline 3156 to arginine 3168, serine 3175 to lysine 3208, and isoleucine 3226 to lysine 3248. Phosphoserine occurs at positions 3067, 3071, and 3075. The segment covering serine 3300 to lysine 3310 has biased composition (basic and acidic residues). A compositionally biased stretch (polar residues) spans serine 3316–glutamate 3327. Composition is skewed to basic and acidic residues over residues asparagine 3350–proline 3363, serine 3373–valine 3399, serine 3419–serine 3431, valine 3448–alanine 3465, serine 3484–alanine 3502, serine 3521–alanine 3539, serine 3558–alanine 3576, glutamate 3599–alanine 3613, serine 3632–alanine 3650, serine 3669–alanine 3687, glutamate 3710–alanine 3724, serine 3743–alanine 3761, serine 3780–alanine 3798, and serine 3817–alanine 3835. A compositionally biased stretch (low complexity) spans glutamate 3836–serine 3850. 8 stretches are compositionally biased toward basic and acidic residues: residues serine 3854–alanine 3872, serine 3891–alanine 3909, serine 3928–alanine 3946, serine 3965–threonine 3983, serine 4002–alanine 4020, serine 4039–lysine 4066, serine 4086–glutamate 4095, and alanine 4115–serine 4141. Composition is skewed to polar residues over residues arginine 4142 to serine 4152 and glutamine 4214 to threonine 4223. 3 stretches are compositionally biased toward basic and acidic residues: residues isoleucine 4362–alanine 4379, aspartate 4386–proline 4410, and isoleucine 4419–glutamine 4432. Positions proline 4443–alanine 4461 are enriched in low complexity. Positions serine 4462 to arginine 4481 are enriched in basic and acidic residues. The segment covering arginine 4498–threonine 4508 has biased composition (polar residues). Over residues glutamate 4517–threonine 4528 the composition is skewed to low complexity. The span at valine 4529–serine 4539 shows a compositional bias: basic and acidic residues. A compositionally biased stretch (low complexity) spans phenylalanine 4540 to glutamine 4560. Basic and acidic residues-rich tracts occupy residues lysine 4575–serine 4584 and serine 4639–lysine 4650. Composition is skewed to low complexity over residues valine 4651–alanine 4662 and threonine 4703–serine 4714. A compositionally biased stretch (acidic residues) spans proline 4744–aspartate 4754. Basic and acidic residues-rich tracts occupy residues glutamate 4755–serine 4764 and leucine 4788–glutamate 4798. Residues threonine 4804 to threonine 4829 are compositionally biased toward low complexity. Positions glutamate 4835–glycine 4851 are enriched in polar residues. Low complexity predominate over residues glycine 4875–serine 4905. Polar residues predominate over residues glycine 4915–proline 4930. Serine 4950 is modified (phosphoserine; by GSK3-beta). Positions valine 4955–glutamine 4970 are enriched in basic and acidic residues. Residues serine 5101–serine 5112 are compositionally biased toward polar residues. Positions serine 5185–glutamine 5196 are enriched in low complexity.

As to quaternary structure, heterodimer of a heavy and a light chain. Interacts with Fmr1. Found in a complex with tubulin and Futsch. In terms of processing, several minor light chains can be created with markedly different pIs. Phosphorylated by SGG/GSK3. Phosphorylated by LRRK2 at the presynapse of neuromuscular junctions, which negatively regulates the activity controlling synaptic differentiation. In terms of tissue distribution, neuronal cells within the PNS and CNS.

It localises to the cytoplasm. It is found in the cytoskeleton. Functionally, during embryogenesis, necessary for dendritic and axonal organization and growth at the neuromuscular junction through the regulation of the synaptic microtubule cytoskeleton. Microtubule hairpin loops are found within a small subset of synaptic boutons at the neuromuscular synapse, these loops are stabilized by futsch. Loop morphology and dynamics suggest that rearrangement of these microtubule-based loops is a critical component of the process of bouton division and for subsequent nerve-terminal growth and branching. Translation is repressed by Fmr1. Together with ringer, required for neuromuscular junction (NMJ) bouton growth by regulating synaptic microtubules. Function with ringer in maintaining microtubule stability and dynamics, is essential for promoting axon regeneration in response to peripheral (PNS) and central nervous system (CNS) injury. In response to axotomy, acts downstream of a stress response cascade involving Xbp1 splicing, to control axon regeneration. The polypeptide is Microtubule-associated protein futsch (futsch) (Drosophila melanogaster (Fruit fly)).